Here is a 362-residue protein sequence, read N- to C-terminus: UV excision repair protein RAD23 homolog A (362 aa).

A Ubiquitin-like domain is found at 1–81 (MAVTITLKTL…VVVMVTKAKT (81 aa)). 2 disordered regions span residues 80-160 (KTSP…LVTG) and 201-227 (GIPG…TEAG). Over residues 88–109 (PSEASPTATPESSTSFPSAPAS) the composition is skewed to low complexity. K122 participates in a covalent cross-link: Glycyl lysine isopeptide (Lys-Gly) (interchain with G-Cter in ubiquitin). A phosphoserine mark is found at S123, S128, S133, S136, and S138. Residues 126-144 (EESAPTTSPESVSGSVPSS) show a composition bias toward low complexity. The UBA 1 domain occupies 161 to 201 (SEYETMLTEIMSMGYERERVVAALRASYNNPHRAVEYLLTG). A phosphoserine mark is found at S205, S294, and S356. A UBA 2 domain is found at 317-357 (PQEKEAIERLKALGFPESLVIQAYFACEKNENLAANFLLSQ).

This sequence belongs to the RAD23 family. In terms of assembly, interacts with XPC; the interaction is suggesting the existence of a functional equivalent variant XPC complex. Interacts with PSMD4 and PSMC5. Interacts with ATXN3. Interacts with UBQLN2.

It is found in the nucleus. Functionally, multiubiquitin chain receptor involved in modulation of proteasomal degradation. Binds to 'Lys-48'-linked polyubiquitin chains in a length-dependent manner and with a lower affinity to 'Lys-63'-linked polyubiquitin chains. Proposed to be capable to bind simultaneously to the 26S proteasome and to polyubiquitinated substrates and to deliver ubiquitinated proteins to the proteasome. Involved in nucleotide excision repair and is thought to be functional equivalent for RAD23B in global genome nucleotide excision repair (GG-NER) by association with XPC. In vitro, XPC:RAD23A dimer has NER activity. Can stabilize XPC. The protein is UV excision repair protein RAD23 homolog A (RAD23A) of Bos taurus (Bovine).